A 198-amino-acid chain; its full sequence is uncharacterized protein (198 aa).

4 helical membrane passes run 20–40, 70–90, 107–127, and 164–184; these read VIVGVVLGLAGTGALIGGLWA, FFVAPCLMLGLLTVLAVTASV, LAIGLMICAATAAAVGALLVW, and VAATVLWPAGIAALVYAVLAA.

This sequence to M.tuberculosis Rv1591.

The protein localises to the cell membrane. This is an uncharacterized protein from Mycobacterium leprae (strain TN).